We begin with the raw amino-acid sequence, 362 residues long: Cobalt-precorrin-5B C(1)-methyltransferase (362 aa).

The protein belongs to the CbiD family.

It catalyses the reaction Co-precorrin-5B + S-adenosyl-L-methionine = Co-precorrin-6A + S-adenosyl-L-homocysteine. Its pathway is cofactor biosynthesis; adenosylcobalamin biosynthesis; cob(II)yrinate a,c-diamide from sirohydrochlorin (anaerobic route): step 6/10. Its function is as follows. Catalyzes the methylation of C-1 in cobalt-precorrin-5B to form cobalt-precorrin-6A. The sequence is that of Cobalt-precorrin-5B C(1)-methyltransferase from Geobacter sulfurreducens (strain ATCC 51573 / DSM 12127 / PCA).